A 210-amino-acid chain; its full sequence is Na(+)-translocating NADH-quinone reductase subunit D (210 aa).

6 helical membrane passes run 14 to 34 (PIVN…ALAV), 42 to 62 (LVMA…ISMI), 72 to 92 (IIVQ…LLQA), 103 to 123 (VFVG…AYAM), 131 to 151 (FMDG…VGFV), and 178 to 198 (NGLL…IWII).

It belongs to the NqrDE/RnfAE family. Composed of six subunits; NqrA, NqrB, NqrC, NqrD, NqrE and NqrF.

Its subcellular location is the cell inner membrane. The catalysed reaction is a ubiquinone + n Na(+)(in) + NADH + H(+) = a ubiquinol + n Na(+)(out) + NAD(+). NQR complex catalyzes the reduction of ubiquinone-1 to ubiquinol by two successive reactions, coupled with the transport of Na(+) ions from the cytoplasm to the periplasm. NqrA to NqrE are probably involved in the second step, the conversion of ubisemiquinone to ubiquinol. This Shewanella baltica (strain OS223) protein is Na(+)-translocating NADH-quinone reductase subunit D.